We begin with the raw amino-acid sequence, 266 residues long: Orcokinin peptides type B (266 aa).

Positions 1–20 (MTAQMFTIALLLSLSAIAAA) are cleaved as a signal peptide. 3 consecutive propeptides follow at residues 21 to 46 (GTIK…GAPV), 240 to 246 (DYDVFPD), and 264 to 266 (NVE).

Belongs to the orcokinin family.

The protein resides in the secreted. In terms of biological role, myotropic peptides that enhance both the frequency and amplitude of spontaneous hindgut contractions. The sequence is that of Orcokinin peptides type B from Procambarus clarkii (Red swamp crayfish).